The sequence spans 331 residues: tRNA-cytidine(32) 2-sulfurtransferase (331 aa).

The PP-loop motif motif lies at 71-76 (SGGKDS). Residues Cys146, Cys149, and Cys237 each contribute to the [4Fe-4S] cluster site.

Belongs to the TtcA family. As to quaternary structure, homodimer. Mg(2+) is required as a cofactor. Requires [4Fe-4S] cluster as cofactor.

Its subcellular location is the cytoplasm. It carries out the reaction cytidine(32) in tRNA + S-sulfanyl-L-cysteinyl-[cysteine desulfurase] + AH2 + ATP = 2-thiocytidine(32) in tRNA + L-cysteinyl-[cysteine desulfurase] + A + AMP + diphosphate + H(+). The protein operates within tRNA modification. Functionally, catalyzes the ATP-dependent 2-thiolation of cytidine in position 32 of tRNA, to form 2-thiocytidine (s(2)C32). The sulfur atoms are provided by the cysteine/cysteine desulfurase (IscS) system. This is tRNA-cytidine(32) 2-sulfurtransferase from Burkholderia multivorans (strain ATCC 17616 / 249).